The primary structure comprises 91 residues: uncharacterized protein (91 aa).

This is an uncharacterized protein from Escherichia coli (Bacteriophage T4).